The primary structure comprises 460 residues: Bifunctional protein GlmU (460 aa).

The interval methionine 1–arginine 232 is pyrophosphorylase. Residues leucine 8 to glycine 11, lysine 22, glutamine 73, glycine 78 to threonine 79, tyrosine 100 to aspartate 102, glycine 137, glutamate 157, asparagine 172, and asparagine 230 contribute to the UDP-N-acetyl-alpha-D-glucosamine site. Aspartate 102 contributes to the Mg(2+) binding site. Asparagine 230 contributes to the Mg(2+) binding site. The interval valine 233–alanine 253 is linker. Residues glycine 254–lysine 460 are N-acetyltransferase. Arginine 336 and lysine 354 together coordinate UDP-N-acetyl-alpha-D-glucosamine. Histidine 366 acts as the Proton acceptor in catalysis. Residues tyrosine 369 and asparagine 380 each contribute to the UDP-N-acetyl-alpha-D-glucosamine site. Residues alanine 383, asparagine 389 to tyrosine 390, serine 408, alanine 426, and arginine 443 each bind acetyl-CoA.

The protein in the N-terminal section; belongs to the N-acetylglucosamine-1-phosphate uridyltransferase family. In the C-terminal section; belongs to the transferase hexapeptide repeat family. In terms of assembly, homotrimer. The cofactor is Mg(2+).

The protein resides in the cytoplasm. It carries out the reaction alpha-D-glucosamine 1-phosphate + acetyl-CoA = N-acetyl-alpha-D-glucosamine 1-phosphate + CoA + H(+). It catalyses the reaction N-acetyl-alpha-D-glucosamine 1-phosphate + UTP + H(+) = UDP-N-acetyl-alpha-D-glucosamine + diphosphate. It functions in the pathway nucleotide-sugar biosynthesis; UDP-N-acetyl-alpha-D-glucosamine biosynthesis; N-acetyl-alpha-D-glucosamine 1-phosphate from alpha-D-glucosamine 6-phosphate (route II): step 2/2. It participates in nucleotide-sugar biosynthesis; UDP-N-acetyl-alpha-D-glucosamine biosynthesis; UDP-N-acetyl-alpha-D-glucosamine from N-acetyl-alpha-D-glucosamine 1-phosphate: step 1/1. Its pathway is bacterial outer membrane biogenesis; LPS lipid A biosynthesis. Functionally, catalyzes the last two sequential reactions in the de novo biosynthetic pathway for UDP-N-acetylglucosamine (UDP-GlcNAc). The C-terminal domain catalyzes the transfer of acetyl group from acetyl coenzyme A to glucosamine-1-phosphate (GlcN-1-P) to produce N-acetylglucosamine-1-phosphate (GlcNAc-1-P), which is converted into UDP-GlcNAc by the transfer of uridine 5-monophosphate (from uridine 5-triphosphate), a reaction catalyzed by the N-terminal domain. In Shewanella baltica (strain OS185), this protein is Bifunctional protein GlmU.